Here is a 415-residue protein sequence, read N- to C-terminus: G patch domain-containing protein 4 (415 aa).

Residue Met-1 is modified to N-acetylmethionine. Thr-4 carries the post-translational modification Phosphothreonine. Positions 11 to 57 constitute a G-patch domain; it reads GMKFAEEQLLKHGWTQGKGLGRRENGITQALKVTLKQDNHGVGHDPA. Residue Lys-46 forms a Glycyl lysine isopeptide (Lys-Gly) (interchain with G-Cter in SUMO2) linkage. Thr-116 bears the Phosphothreonine mark. 2 disordered regions span residues 116-141 and 191-415; these read TSGE…TPPK and LGTS…VDLS. Residues 118-141 are compositionally biased toward basic and acidic residues; sequence GEEKPDRDLGNCSDVDNHEPTPPK. Residue Ser-130 is modified to Phosphoserine. Over residues 191-201 the composition is skewed to polar residues; it reads LGTSQPLTDSE. The span at 224-239 shows a compositional bias: basic and acidic residues; sequence SLGDELLGHTDRSFRD. The residue at position 258 (Ser-258) is a Phosphoserine. Residues 335-345 show a composition bias toward acidic residues; the sequence is EDLDTQEEEGK. Basic residues predominate over residues 353-364; sequence RKVRRKDKRKRQ. The span at 387–397 shows a compositional bias: basic and acidic residues; the sequence is AGERSRQYPKE. Residues 398-407 are compositionally biased toward basic residues; that stretch reads RAKKKKRKRD.

This Mus musculus (Mouse) protein is G patch domain-containing protein 4 (Gpatch4).